A 338-amino-acid chain; its full sequence is Fructose-1,6-bisphosphatase class 1 (338 aa).

Residues E90, D112, L114, and D115 each coordinate Mg(2+). Residues 115-118, N207, and K273 each bind substrate; that span reads DGSS. Residue E279 coordinates Mg(2+).

Belongs to the FBPase class 1 family. As to quaternary structure, homotetramer. It depends on Mg(2+) as a cofactor.

It is found in the cytoplasm. It catalyses the reaction beta-D-fructose 1,6-bisphosphate + H2O = beta-D-fructose 6-phosphate + phosphate. The protein operates within carbohydrate biosynthesis; gluconeogenesis. The chain is Fructose-1,6-bisphosphatase class 1 from Stenotrophomonas maltophilia (strain K279a).